The sequence spans 400 residues: DNA polymerase IV (400 aa).

One can recognise a UmuC domain in the interval 5-187 (IFLVDMNAFF…LPVEFMNGIG (183 aa)). Residues D9 and D105 each coordinate Mg(2+). E106 is an active-site residue.

This sequence belongs to the DNA polymerase type-Y family. In terms of assembly, monomer. Mg(2+) serves as cofactor.

It localises to the cytoplasm. The enzyme catalyses DNA(n) + a 2'-deoxyribonucleoside 5'-triphosphate = DNA(n+1) + diphosphate. Poorly processive, error-prone DNA polymerase involved in untargeted mutagenesis. Copies undamaged DNA at stalled replication forks, which arise in vivo from mismatched or misaligned primer ends. These misaligned primers can be extended by PolIV. Exhibits no 3'-5' exonuclease (proofreading) activity. May be involved in translesional synthesis, in conjunction with the beta clamp from PolIII. This chain is DNA polymerase IV, found in Clostridium kluyveri (strain ATCC 8527 / DSM 555 / NBRC 12016 / NCIMB 10680 / K1).